The primary structure comprises 207 residues: Mediator of RNA polymerase II transcription subunit 21 (207 aa).

A disordered region spans residues 37–121; sequence PHPDVPDAAP…PDSPRTFASR (85 aa). The span at 65-80 shows a compositional bias: low complexity; the sequence is PVPAQSQASPPAQNPA. Positions 84–96 are enriched in gly residues; it reads AGAGTSVGEGGQT. Over residues 97 to 108 the composition is skewed to low complexity; that stretch reads PGPAAGAGADPN. Residues 146–196 adopt a coiled-coil conformation; sequence IDSSEAEQEKRIRELEGELRRVEEERELKMRELKRLRRTLENVLRAVETGL.

This sequence belongs to the Mediator complex subunit 21 family. In terms of assembly, component of the Mediator complex.

Its subcellular location is the nucleus. Functionally, component of the Mediator complex, a coactivator involved in the regulated transcription of nearly all RNA polymerase II-dependent genes. Mediator functions as a bridge to convey information from gene-specific regulatory proteins to the basal RNA polymerase II transcription machinery. Mediator is recruited to promoters by direct interactions with regulatory proteins and serves as a scaffold for the assembly of a functional preinitiation complex with RNA polymerase II and the general transcription factors. This is Mediator of RNA polymerase II transcription subunit 21 (srb7) from Neosartorya fischeri (strain ATCC 1020 / DSM 3700 / CBS 544.65 / FGSC A1164 / JCM 1740 / NRRL 181 / WB 181) (Aspergillus fischerianus).